The primary structure comprises 396 residues: uncharacterized protein (396 aa).

The next 12 helical transmembrane spans lie at T8 to S28, I44 to V64, P73 to P93, L97 to Y117, V133 to L153, M158 to L178, A213 to P233, L250 to N270, V276 to V296, I304 to M324, I338 to A358, and I363 to F383.

This sequence belongs to the major facilitator superfamily.

It is found in the cell membrane. This is an uncharacterized protein from Bacillus subtilis (strain 168).